A 587-amino-acid polypeptide reads, in one-letter code: Putative adenylate cyclase 3 (587 aa).

In terms of domain architecture, Guanylate cyclase spans 12-127; sequence AILAADAVGY…DGVNVAARIE (116 aa). 5 TPR repeats span residues 343–376, 421–454, 455–488, 490–522, and 524–556; these read LLVR…DPGM, PQGH…DPNS, ANAY…DPQF, LSLH…APRS, and MTRF…NPSF.

Belongs to the adenylyl cyclase class-3 family.

The enzyme catalyses ATP = 3',5'-cyclic AMP + diphosphate. This Rhizobium meliloti (strain 1021) (Ensifer meliloti) protein is Putative adenylate cyclase 3 (cya3).